Reading from the N-terminus, the 452-residue chain is Bifunctional protein GlmU (452 aa).

Residues 1-226 (MSLAVVILAA…GWEVDGVNDR (226 aa)) are pyrophosphorylase. Residues 8-11 (LAAG), K22, Q73, 78-79 (GT), 99-101 (YGD), G136, E151, N166, and N224 contribute to the UDP-N-acetyl-alpha-D-glucosamine site. Mg(2+) is bound at residue D101. Mg(2+) is bound at residue N224. A linker region spans residues 227 to 247 (VQLARLERIYQQAQAETLMRD). Residues 248 to 452 (GVTLLDPSRL…VANWQRPKKG (205 aa)) are N-acetyltransferase. UDP-N-acetyl-alpha-D-glucosamine-binding residues include R330 and K348. H360 (proton acceptor) is an active-site residue. 2 residues coordinate UDP-N-acetyl-alpha-D-glucosamine: Y363 and N374. Residues A377, 383–384 (NY), S402, A420, and R437 each bind acetyl-CoA.

This sequence in the N-terminal section; belongs to the N-acetylglucosamine-1-phosphate uridyltransferase family. In the C-terminal section; belongs to the transferase hexapeptide repeat family. In terms of assembly, homotrimer. The cofactor is Mg(2+).

The protein localises to the cytoplasm. It carries out the reaction alpha-D-glucosamine 1-phosphate + acetyl-CoA = N-acetyl-alpha-D-glucosamine 1-phosphate + CoA + H(+). It catalyses the reaction N-acetyl-alpha-D-glucosamine 1-phosphate + UTP + H(+) = UDP-N-acetyl-alpha-D-glucosamine + diphosphate. The protein operates within nucleotide-sugar biosynthesis; UDP-N-acetyl-alpha-D-glucosamine biosynthesis; N-acetyl-alpha-D-glucosamine 1-phosphate from alpha-D-glucosamine 6-phosphate (route II): step 2/2. Its pathway is nucleotide-sugar biosynthesis; UDP-N-acetyl-alpha-D-glucosamine biosynthesis; UDP-N-acetyl-alpha-D-glucosamine from N-acetyl-alpha-D-glucosamine 1-phosphate: step 1/1. It participates in bacterial outer membrane biogenesis; LPS lipid A biosynthesis. In terms of biological role, catalyzes the last two sequential reactions in the de novo biosynthetic pathway for UDP-N-acetylglucosamine (UDP-GlcNAc). The C-terminal domain catalyzes the transfer of acetyl group from acetyl coenzyme A to glucosamine-1-phosphate (GlcN-1-P) to produce N-acetylglucosamine-1-phosphate (GlcNAc-1-P), which is converted into UDP-GlcNAc by the transfer of uridine 5-monophosphate (from uridine 5-triphosphate), a reaction catalyzed by the N-terminal domain. This is Bifunctional protein GlmU from Alcanivorax borkumensis (strain ATCC 700651 / DSM 11573 / NCIMB 13689 / SK2).